A 485-amino-acid polypeptide reads, in one-letter code: Cysteine--tRNA ligase (485 aa).

Cys27 is a binding site for Zn(2+). The 'HIGH' region motif lies at 29–39 (ITAYDLCHIGH). Zn(2+) contacts are provided by Cys208, His233, and Glu237. Positions 265–269 (KMSKS) match the 'KMSKS' region motif. Lys268 lines the ATP pocket.

This sequence belongs to the class-I aminoacyl-tRNA synthetase family. Monomer. Zn(2+) is required as a cofactor.

The protein resides in the cytoplasm. The enzyme catalyses tRNA(Cys) + L-cysteine + ATP = L-cysteinyl-tRNA(Cys) + AMP + diphosphate. This is Cysteine--tRNA ligase from Nitratidesulfovibrio vulgaris (strain ATCC 29579 / DSM 644 / CCUG 34227 / NCIMB 8303 / VKM B-1760 / Hildenborough) (Desulfovibrio vulgaris).